Consider the following 357-residue polypeptide: DNA integrity scanning protein DisA (357 aa).

The DAC domain maps to 9–147 (DRKLLEILKT…DDIKYILRDS (139 aa)). ATP contacts are provided by residues glycine 76, leucine 94, and 107-111 (TRHRT).

Belongs to the DisA family. As to quaternary structure, homooctamer. The cofactor is Mg(2+).

The enzyme catalyses 2 ATP = 3',3'-c-di-AMP + 2 diphosphate. Participates in a DNA-damage check-point that is active prior to asymmetric division when DNA is damaged. DisA forms globular foci that rapidly scan along the chromosomes during sporulation, searching for lesions. When a lesion is present, DisA pauses at the lesion site. This triggers a cellular response that culminates in a temporary block in sporulation initiation. Functionally, also has diadenylate cyclase activity, catalyzing the condensation of 2 ATP molecules into cyclic di-AMP (c-di-AMP). c-di-AMP acts as a signaling molecule that couples DNA integrity with progression of sporulation. The rise in c-di-AMP level generated by DisA while scanning the chromosome, operates as a positive signal that advances sporulation; upon encountering a lesion, the DisA focus arrests at the damaged site and halts c-di-AMP synthesis. The sequence is that of DNA integrity scanning protein DisA from Clostridium acetobutylicum (strain ATCC 824 / DSM 792 / JCM 1419 / IAM 19013 / LMG 5710 / NBRC 13948 / NRRL B-527 / VKM B-1787 / 2291 / W).